Consider the following 442-residue polypeptide: MNRTVFLAFVFGWYFCSIALSIYNRWMFDPKDGLGIGYPVLVTTFHQATLWLLSGIYIKLRHKPVKNVLRKNNGFNWSFFLKFLLPTAVASAGDIGLSNVSFQYVPLTIYTIIKSSSIAFVLLFGCIFKLEKFHWKLALSVIIMFVGVALMVFKPSDSTSTKNDQALVIFGSFLVLASSCLSGLRWVYTQLMLRNNPIQTNTAAAVEESDGALFTENEDNVDNEPVVNLANNKMLENFGESKPHPIHTIHQLAPIMGITLLLTSLLVEKPFPGIFSSSIFRLDTSNGGVGTETTVLSIVRGIVLLILPGFAVFLLTICEFSILEQTPVLTVSIVGIVKELLTVIFGIIILSERLSGFYNWLGMLIIMADVCYYNYFRYKQDLLQKYHSVSTQDNRNELKGFQDFEQLGSKKIAPYSISVDLTNQEYELDMIAQNVSRSSQQV.

The Cytoplasmic portion of the chain corresponds to 1 to 3 (MNR). Residues 4–24 (TVFLAFVFGWYFCSIALSIYN) form a helical membrane-spanning segment. Residues 25–32 (RWMFDPKD) are Extracellular-facing. A helical transmembrane segment spans residues 33–53 (GLGIGYPVLVTTFHQATLWLL). The Cytoplasmic segment spans residues 54–76 (SGIYIKLRHKPVKNVLRKNNGFN). Residues 77–97 (WSFFLKFLLPTAVASAGDIGL) traverse the membrane as a helical segment. Residues 98–107 (SNVSFQYVPL) lie on the Extracellular side of the membrane. N-linked (GlcNAc...) asparagine glycosylation occurs at Asn-99. A helical transmembrane segment spans residues 108 to 128 (TIYTIIKSSSIAFVLLFGCIF). The Cytoplasmic portion of the chain corresponds to 129-132 (KLEK). Residues 133–153 (FHWKLALSVIIMFVGVALMVF) traverse the membrane as a helical segment. The Extracellular portion of the chain corresponds to 154–166 (KPSDSTSTKNDQA). A helical membrane pass occupies residues 167–187 (LVIFGSFLVLASSCLSGLRWV). Over 188–254 (YTQLMLRNNP…PIHTIHQLAP (67 aa)) the chain is Cytoplasmic. The residue at position 209 (Ser-209) is a Phosphoserine. A helical transmembrane segment spans residues 255–275 (IMGITLLLTSLLVEKPFPGIF). The Extracellular portion of the chain corresponds to 276–301 (SSSIFRLDTSNGGVGTETTVLSIVRG). A helical transmembrane segment spans residues 302-322 (IVLLILPGFAVFLLTICEFSI). The Cytoplasmic segment spans residues 323–329 (LEQTPVL). A helical membrane pass occupies residues 330-350 (TVSIVGIVKELLTVIFGIIIL). The Extracellular segment spans residues 351-355 (SERLS). Residues 356 to 376 (GFYNWLGMLIIMADVCYYNYF) traverse the membrane as a helical segment. Over 377–442 (RYKQDLLQKY…QNVSRSSQQV (66 aa)) the chain is Cytoplasmic.

This sequence belongs to the TPT transporter family. SLC35C subfamily.

It is found in the golgi apparatus membrane. It localises to the cytoplasmic vesicle. The protein localises to the COPI-coated vesicle membrane. In Saccharomyces cerevisiae (strain ATCC 204508 / S288c) (Baker's yeast), this protein is Putative nucleotide-sugar transporter YMD8 (YMD8).